Consider the following 375-residue polypeptide: Neuropeptide Y receptor type 4 (375 aa).

The Extracellular segment spans residues 1–39 (MNTSHFLAPLFPGSLQGKNGTNPLDSPYNFSDGCQDSAE). N-linked (GlcNAc...) asparagine glycosylation is found at Asn2, Asn19, and Asn29. Residues 40–60 (LLAFIITTYSIETILGVLGNL) form a helical membrane-spanning segment. Topologically, residues 61-78 (CLIFVTTRQKEKSNVTNL) are cytoplasmic. A helical membrane pass occupies residues 79–99 (LIANLAFSDFLMCLICQPLTV). Residues 100-116 (TYTIMDYWIFGEVLCKM) are Extracellular-facing. Cysteines 114 and 201 form a disulfide. The chain crosses the membrane as a helical span at residues 117-137 (LTFIQCMSVTVSILSLVLVAL). The Cytoplasmic portion of the chain corresponds to 138 to 155 (ERHQLIINPTGWKPSIFQ). The helical transmembrane segment at 156–176 (AYLGIVVIWFVSCFLSLPFLA) threads the bilayer. Residues 177 to 211 (NSTLNDLFHYNHSKVVEFLEDKVVCFVSWSSDHHR) are Extracellular-facing. Asn187 is a glycosylation site (N-linked (GlcNAc...) asparagine). The helical transmembrane segment at 212-232 (LIYTTFLLLFQYCIPLAFILV) threads the bilayer. Topologically, residues 233 to 266 (CYIRIYQRLQRQKHVFHAHACSSRAGQMKRINSM) are cytoplasmic. Residues 267-287 (LMTMVTAFAVLWLPLHVFNTL) form a helical membrane-spanning segment. Residues 288-301 (EDWYQEAIPACHGN) are Extracellular-facing. The helical transmembrane segment at 302 to 322 (LIFLMCHLLAMASTCVNPFIY) threads the bilayer. Over 323-375 (GFLNINFKKDIKALVLTCHCRSPRGESEHLPLSTVHTDLSKGSMRMGSKSNFI) the chain is Cytoplasmic. Cys340 carries S-palmitoyl cysteine lipidation.

Belongs to the G-protein coupled receptor 1 family. Heart, detected in small intestine.

The protein resides in the cell membrane. Functionally, g protein-coupled receptor for PPY/pancreatic polypeptide/PP that is negatively coupled to cAMP. Has much lower affinity for the NPY/neuropeptide Y and PYY/peptide YY. This Mus musculus (Mouse) protein is Neuropeptide Y receptor type 4 (Npy4r).